The primary structure comprises 384 residues: S-adenosylmethionine synthase (384 aa).

His15 provides a ligand contact to ATP. Position 17 (Asp17) interacts with Mg(2+). Residue Glu43 participates in K(+) binding. Glu56 and Gln99 together coordinate L-methionine. The flexible loop stretch occupies residues 99–109 (QSPDINQGVDR). Residues 164 to 166 (DAK), 230 to 231 (RF), Asp239, 245 to 246 (RK), Ala262, and Lys266 each bind ATP. Asp239 provides a ligand contact to L-methionine. Lys270 serves as a coordination point for L-methionine.

The protein belongs to the AdoMet synthase family. As to quaternary structure, homotetramer; dimer of dimers. Mg(2+) is required as a cofactor. Requires K(+) as cofactor.

It localises to the cytoplasm. It catalyses the reaction L-methionine + ATP + H2O = S-adenosyl-L-methionine + phosphate + diphosphate. Its pathway is amino-acid biosynthesis; S-adenosyl-L-methionine biosynthesis; S-adenosyl-L-methionine from L-methionine: step 1/1. In terms of biological role, catalyzes the formation of S-adenosylmethionine (AdoMet) from methionine and ATP. The overall synthetic reaction is composed of two sequential steps, AdoMet formation and the subsequent tripolyphosphate hydrolysis which occurs prior to release of AdoMet from the enzyme. This chain is S-adenosylmethionine synthase, found in Salmonella agona (strain SL483).